Reading from the N-terminus, the 344-residue chain is Proline-rich transmembrane protein 2 (344 aa).

Disordered stretches follow at residues 1–220 (MAAS…GAPP) and 233–265 (GRAH…GGEG). The Cytoplasmic portion of the chain corresponds to 1–272 (MAASSSEVSE…GEGTQKPRDY (272 aa)). Phosphoserine is present on S28. Over residues 69-82 (PETTETPVETPETV) the composition is skewed to low complexity. Residues T74 and T78 each carry the phosphothreonine modification. Polar residues predominate over residues 124-143 (AEQQSAAPPEPTSEQALQLN). The span at 151-162 (TSQPPPKPPLQA) shows a compositional bias: pro residues. Positions 168–178 (ENPTTEVLTES) are enriched in polar residues. The span at 201–211 (APQPHSPPSTK) shows a compositional bias: pro residues. S242 is subject to Phosphoserine. Omega-N-methylarginine is present on R244. Residues S252 and S253 each carry the phosphoserine modification. An intramembrane region (helical) is located at residues 273 to 293 (IILAILSCFCPMWPVNIVAFA). The Cytoplasmic segment spans residues 294–321 (YAVMSRNSLQQGDVDGAQRLGRVAKLLS). A helical transmembrane segment spans residues 322-342 (IVALVGGVLIIIASCVINLGV). Residues 343–344 (YK) are Extracellular-facing.

Belongs to the CD225/Dispanin family. In terms of assembly, component of the outer core of AMPAR complex. AMPAR complex consists of an inner core made of 4 pore-forming GluA/GRIA proteins (GRIA1, GRIA2, GRIA3 and GRIA4) and 4 major auxiliary subunits arranged in a twofold symmetry. One of the two pairs of distinct binding sites is occupied either by CNIH2, CNIH3 or CACNG2, CACNG3. The other harbors CACNG2, CACNG3, CACNG4, CACNG8 or GSG1L. This inner core of AMPAR complex is complemented by outer core constituents binding directly to the GluA/GRIA proteins at sites distinct from the interaction sites of the inner core constituents. Outer core constituents include at least PRRT1, PRRT2, CKAMP44/SHISA9, FRRS1L and NRN1. The proteins of the inner and outer core serve as a platform for other, more peripherally associated AMPAR constituents. Alone or in combination, these auxiliary subunits control the gating and pharmacology of the AMPAR complex and profoundly impact their biogenesis and protein processing. Interacts with intersectin 1/ITSN1. Interacts with SNARE complex components, including SNAP25, STX1A, SYT1 and SYT2; this interaction may inhibit SNARE complex formation. As to expression, neuron-specific expression throughout the brain, including hippocampus (at protein level).

It is found in the cell membrane. It localises to the presynaptic cell membrane. The protein resides in the synapse. The protein localises to the cell projection. Its subcellular location is the axon. It is found in the cytoplasmic vesicle. It localises to the secretory vesicle. The protein resides in the synaptic vesicle membrane. The protein localises to the postsynaptic density membrane. Its subcellular location is the dendritic spine. As a component of the outer core of AMPAR complex, may be involved in synaptic transmission in the central nervous system. In hippocampal neurons, in presynaptic terminals, plays an important role in the final steps of neurotransmitter release, possibly by regulating Ca(2+)-sensing. In the cerebellum, may inhibit SNARE complex formation and down-regulate short-term facilitation. The chain is Proline-rich transmembrane protein 2 (Prrt2) from Rattus norvegicus (Rat).